The primary structure comprises 234 residues: Probable chemoreceptor glutamine deamidase CheD (234 aa).

Belongs to the CheD family.

It catalyses the reaction L-glutaminyl-[protein] + H2O = L-glutamyl-[protein] + NH4(+). Probably deamidates glutamine residues to glutamate on methyl-accepting chemotaxis receptors (MCPs), playing an important role in chemotaxis. The chain is Probable chemoreceptor glutamine deamidase CheD from Burkholderia mallei (strain NCTC 10247).